Here is a 166-residue protein sequence, read N- to C-terminus: Lipoprotein signal peptidase (166 aa).

A run of 3 helical transmembrane segments spans residues 12-32, 66-86, and 101-121; these read LPIALFILVALVADQAIKYLV, MEGWFIVGMRLAVVAFVLWLW, and AMIIAGALGNLVDRLLFGYVI. Residues aspartate 122 and aspartate 140 contribute to the active site. Residues 132-152 form a helical membrane-spanning segment; it reads SFAVFNLADSFITVGAGAIIL.

This sequence belongs to the peptidase A8 family.

Its subcellular location is the cell inner membrane. It catalyses the reaction Release of signal peptides from bacterial membrane prolipoproteins. Hydrolyzes -Xaa-Yaa-Zaa-|-(S,diacylglyceryl)Cys-, in which Xaa is hydrophobic (preferably Leu), and Yaa (Ala or Ser) and Zaa (Gly or Ala) have small, neutral side chains.. Its pathway is protein modification; lipoprotein biosynthesis (signal peptide cleavage). Functionally, this protein specifically catalyzes the removal of signal peptides from prolipoproteins. The polypeptide is Lipoprotein signal peptidase (Sinorhizobium fredii (strain NBRC 101917 / NGR234)).